Consider the following 312-residue polypeptide: ADP-L-glycero-D-manno-heptose-6-epimerase (312 aa).

Residues 10–11 (FI), 31–32 (DN), K38, K53, 75–79 (EGACS), and N92 each bind NADP(+). The active-site Proton acceptor is Y140. K144 serves as a coordination point for NADP(+). Residue N169 coordinates substrate. The NADP(+) site is built by V170 and K178. K178 acts as the Proton acceptor in catalysis. Residues S180, H187, 201–204 (FAGS), R209, and Y274 contribute to the substrate site.

It belongs to the NAD(P)-dependent epimerase/dehydratase family. HldD subfamily. Homopentamer. The cofactor is NADP(+).

The catalysed reaction is ADP-D-glycero-beta-D-manno-heptose = ADP-L-glycero-beta-D-manno-heptose. Its pathway is nucleotide-sugar biosynthesis; ADP-L-glycero-beta-D-manno-heptose biosynthesis; ADP-L-glycero-beta-D-manno-heptose from D-glycero-beta-D-manno-heptose 7-phosphate: step 4/4. It participates in bacterial outer membrane biogenesis; LPS core biosynthesis. Catalyzes the interconversion between ADP-D-glycero-beta-D-manno-heptose and ADP-L-glycero-beta-D-manno-heptose via an epimerization at carbon 6 of the heptose. The chain is ADP-L-glycero-D-manno-heptose-6-epimerase from Photorhabdus laumondii subsp. laumondii (strain DSM 15139 / CIP 105565 / TT01) (Photorhabdus luminescens subsp. laumondii).